Reading from the N-terminus, the 920-residue chain is Zinc finger MIZ domain-containing protein 2 (920 aa).

Disordered regions lie at residues 1–22 (MNSM…GSFA) and 54–79 (SQVL…VAGG). A compositionally biased stretch (low complexity) spans 60–79 (PMGPAGSPSGSSMMPGVAGG). Omega-N-methylarginine is present on arginine 111. 2 disordered regions span residues 243-265 (GQRL…RQGV) and 286-391 (PSTA…SPNQ). 2 positions are modified to asymmetric dimethylarginine: arginine 245 and arginine 262. Positions 295-304 (PGQPPAPSPS) are enriched in pro residues. Over residues 334–354 (EQFNGQGASFNGGSVSYSQPG) the composition is skewed to polar residues. Residues 366–379 (PSSPLPGNPTPPMT) are compositionally biased toward pro residues. Low complexity predominate over residues 380–389 (PSSSVPYMSP). Glycyl lysine isopeptide (Lys-Gly) (interchain with G-Cter in SUMO2) cross-links involve residues lysine 402 and lysine 457. Positions 435–506 (PFRLQHNLAV…TIERGDNKTS (72 aa)) are interaction with AR. The SP-RING-type zinc finger occupies 585-671 (GEDGVEQTAI…IYIQNSDYEE (87 aa)). 4 residues coordinate Zn(2+): cysteine 616, histidine 618, cysteine 639, and cysteine 642. Lysine 692 participates in a covalent cross-link: Glycyl lysine isopeptide (Lys-Gly) (interchain with G-Cter in SUMO2). Residues 803-920 (SQMAPAGHLD…DDLLSLFENN (118 aa)) are disordered. Residues 876–890 (AGEAPEPALDLLPEL) show a composition bias toward low complexity. Polar residues predominate over residues 906–920 (PTNNNDDLLSLFENN).

As to quaternary structure, interacts with AR, SMARCA4/BRG1 and SMARCE1/BAF57. Interaction with either SMARCA4 and SMARCE1 enhances AR-mediated transcription. As to expression, expressed most abundantly in testis with lower levels in heart, brain, pancreas, prostate and ovary.

The protein localises to the nucleus. Increases ligand-dependent transcriptional activity of AR and other nuclear hormone receptors. This Homo sapiens (Human) protein is Zinc finger MIZ domain-containing protein 2 (ZMIZ2).